The sequence spans 496 residues: Glycerol kinase (496 aa).

An ADP-binding site is contributed by T12. Residues T12, T13, and S14 each coordinate ATP. Sn-glycerol 3-phosphate is bound at residue T12. R16 provides a ligand contact to ADP. Residues R82, E83, and Y134 each contribute to the sn-glycerol 3-phosphate site. 3 residues coordinate glycerol: R82, E83, and Y134. Residue H230 is modified to Phosphohistidine; by HPr. D244 contributes to the sn-glycerol 3-phosphate binding site. D244 and Q245 together coordinate glycerol. Positions 266 and 309 each coordinate ADP. 4 residues coordinate ATP: T266, G309, Q313, and G410. 2 residues coordinate ADP: G410 and N414.

Belongs to the FGGY kinase family. Homotetramer and homodimer (in equilibrium). The phosphoenolpyruvate-dependent sugar phosphotransferase system (PTS), including enzyme I, and histidine-containing protein (HPr) are required for the phosphorylation, which leads to the activation of the enzyme.

The catalysed reaction is glycerol + ATP = sn-glycerol 3-phosphate + ADP + H(+). It participates in polyol metabolism; glycerol degradation via glycerol kinase pathway; sn-glycerol 3-phosphate from glycerol: step 1/1. Its activity is regulated as follows. Activated by phosphorylation and inhibited by fructose 1,6-bisphosphate (FBP). Its function is as follows. Key enzyme in the regulation of glycerol uptake and metabolism. Catalyzes the phosphorylation of glycerol to yield sn-glycerol 3-phosphate. The protein is Glycerol kinase of Bacillus subtilis (strain 168).